We begin with the raw amino-acid sequence, 249 residues long: Probable transcriptional regulatory protein Psyc_0938 (249 aa).

The protein belongs to the TACO1 family.

It localises to the cytoplasm. In Psychrobacter arcticus (strain DSM 17307 / VKM B-2377 / 273-4), this protein is Probable transcriptional regulatory protein Psyc_0938.